We begin with the raw amino-acid sequence, 122 residues long: Histone H2B 1 (122 aa).

The disordered stretch occupies residues 1-30; it reads MPPKPSAKGAKKAAKTVTKPKDGKKRRHAR. O-linked (GlcNAc) serine glycosylation is present at S109. A Glycyl lysine isopeptide (Lys-Gly) (interchain with G-Cter in ubiquitin) cross-link involves residue K117.

This sequence belongs to the histone H2B family. As to quaternary structure, the nucleosome is a histone octamer containing two molecules each of H2A, H2B, H3 and H4 assembled in one H3-H4 heterotetramer and two H2A-H2B heterodimers. The octamer wraps approximately 147 bp of DNA. In terms of processing, monoubiquitination of Lys-117 gives a specific tag for epigenetic transcriptional activation and is also prerequisite for histone H3 'Lys-4' and 'Lys-79' methylation. GlcNAcylation at Ser-109 promotes monoubiquitination of Lys-117. It fluctuates in response to extracellular glucose, and associates with transcribed genes.

The protein localises to the nucleus. Its subcellular location is the chromosome. In terms of biological role, core component of nucleosome. Nucleosomes wrap and compact DNA into chromatin, limiting DNA accessibility to the cellular machineries which require DNA as a template. Histones thereby play a central role in transcription regulation, DNA repair, DNA replication and chromosomal stability. DNA accessibility is regulated via a complex set of post-translational modifications of histones, also called histone code, and nucleosome remodeling. The chain is Histone H2B 1 (his-11) from Caenorhabditis elegans.